The following is a 625-amino-acid chain: 1-deoxy-D-xylulose-5-phosphate synthase (625 aa).

Residues His-74 and 115 to 117 (GHS) each bind thiamine diphosphate. Residue Asp-146 participates in Mg(2+) binding. Thiamine diphosphate-binding positions include 147–148 (GA), Asn-175, Tyr-286, and Glu-367. Residue Asn-175 coordinates Mg(2+).

This sequence belongs to the transketolase family. DXPS subfamily. In terms of assembly, homodimer. It depends on Mg(2+) as a cofactor. The cofactor is thiamine diphosphate.

It carries out the reaction D-glyceraldehyde 3-phosphate + pyruvate + H(+) = 1-deoxy-D-xylulose 5-phosphate + CO2. The protein operates within metabolic intermediate biosynthesis; 1-deoxy-D-xylulose 5-phosphate biosynthesis; 1-deoxy-D-xylulose 5-phosphate from D-glyceraldehyde 3-phosphate and pyruvate: step 1/1. Functionally, catalyzes the acyloin condensation reaction between C atoms 2 and 3 of pyruvate and glyceraldehyde 3-phosphate to yield 1-deoxy-D-xylulose-5-phosphate (DXP). This is 1-deoxy-D-xylulose-5-phosphate synthase from Lachnoclostridium phytofermentans (strain ATCC 700394 / DSM 18823 / ISDg) (Clostridium phytofermentans).